The primary structure comprises 89 residues: Small ribosomal subunit protein uS15 (89 aa).

This sequence belongs to the universal ribosomal protein uS15 family. In terms of assembly, part of the 30S ribosomal subunit. Forms a bridge to the 50S subunit in the 70S ribosome, contacting the 23S rRNA.

In terms of biological role, one of the primary rRNA binding proteins, it binds directly to 16S rRNA where it helps nucleate assembly of the platform of the 30S subunit by binding and bridging several RNA helices of the 16S rRNA. Functionally, forms an intersubunit bridge (bridge B4) with the 23S rRNA of the 50S subunit in the ribosome. The protein is Small ribosomal subunit protein uS15 of Shewanella baltica (strain OS223).